Consider the following 361-residue polypeptide: 3-dehydroquinate synthase (361 aa).

NAD(+)-binding positions include 104-108 (GVIGD), 128-129 (TT), K141, K150, and 168-171 (FLRT). Positions 183, 246, and 263 each coordinate Zn(2+).

Belongs to the sugar phosphate cyclases superfamily. Dehydroquinate synthase family. Co(2+) is required as a cofactor. Zn(2+) serves as cofactor. The cofactor is NAD(+).

Its subcellular location is the cytoplasm. The catalysed reaction is 7-phospho-2-dehydro-3-deoxy-D-arabino-heptonate = 3-dehydroquinate + phosphate. The protein operates within metabolic intermediate biosynthesis; chorismate biosynthesis; chorismate from D-erythrose 4-phosphate and phosphoenolpyruvate: step 2/7. Functionally, catalyzes the conversion of 3-deoxy-D-arabino-heptulosonate 7-phosphate (DAHP) to dehydroquinate (DHQ). This Opitutus terrae (strain DSM 11246 / JCM 15787 / PB90-1) protein is 3-dehydroquinate synthase.